The chain runs to 504 residues: MMTTSLIWGIAIAACCCLWLILGIRRRQTGEPPLENGLIPYLGCALQFGANPLEFLRANQRKHGHVFTCKLMGKYVHFITNPLSYHKVLCHGKYFDWKKFHFATSAKAFGHRSIDPMDGNTTENINDTFIKTLQGHALNSLTESMMENLQRIMRPPVSSNSKTAAWVTEGMYSFCYRVMFEAGYLTIFGRDLTRRDTQKAHILNNLDNFKQFDKVFPALVAGLPIHMFRTAHNAREKLAESLRHENLQKRESISELISLRMFLNDTLSTFDDLEKAKTHLVVLWASQANTIPATFWSLFQMIRNPEAMKAATEEVKRTLENAGQKVSLEGNPICLSQAELNDLPVLDSIIKESLRLSSASLNIRTAKEDFTLHLEDGSYNIRKDDIIALYPQLMHLDPEIYPDPLTFKYDRYLDENGKTKTTFYCNGLKLKYYYMPFGSGATICPGRLFAIHEIKQFLILMLSYFELELIEGQAKCPPLDQSRAGLGILPPLNDIEFKYKFKHL.

The chain crosses the membrane as a helical span at residues 4–24; the sequence is TSLIWGIAIAACCCLWLILGI. Cys-444 contributes to the heme binding site.

It belongs to the cytochrome P450 family. The cofactor is heme. Detected in liver.

The protein localises to the endoplasmic reticulum membrane. It is found in the microsome membrane. The catalysed reaction is cholesterol + reduced [NADPH--hemoprotein reductase] + O2 = 7alpha-hydroxycholesterol + oxidized [NADPH--hemoprotein reductase] + H2O + H(+). It catalyses the reaction 4beta-hydroxycholesterol + reduced [NADPH--hemoprotein reductase] + O2 = 4beta,7alpha-dihydroxycholesterol + oxidized [NADPH--hemoprotein reductase] + H2O + H(+). The enzyme catalyses lathosterol + reduced [NADPH--hemoprotein reductase] + O2 = 7alpha,8alpha-epoxy-5alpha-cholestan-3beta-ol + oxidized [NADPH--hemoprotein reductase] + H2O + H(+). It carries out the reaction lathosterol + reduced [NADPH--hemoprotein reductase] + O2 = 5alpha-cholestan-7-oxo-3beta-ol + oxidized [NADPH--hemoprotein reductase] + H2O + H(+). The catalysed reaction is 7-dehydrocholesterol + reduced [NADPH--hemoprotein reductase] + O2 = 7-oxocholesterol + oxidized [NADPH--hemoprotein reductase] + H2O + H(+). It catalyses the reaction (24S)-hydroxycholesterol + reduced [NADPH--hemoprotein reductase] + O2 = (24S)-7alpha-dihydroxycholesterol + oxidized [NADPH--hemoprotein reductase] + H2O + H(+). The enzyme catalyses (24R)-hydroxycholesterol + reduced [NADPH--hemoprotein reductase] + O2 = (24R)-7alpha-dihydroxycholesterol + oxidized [NADPH--hemoprotein reductase] + H2O + H(+). Its pathway is lipid metabolism; bile acid biosynthesis. It functions in the pathway steroid metabolism; cholesterol degradation. A cytochrome P450 monooxygenase involved in the metabolism of endogenous cholesterol and its oxygenated derivatives (oxysterols). Mechanistically, uses molecular oxygen inserting one oxygen atom into a substrate, and reducing the second into a water molecule, with two electrons provided by NADPH via cytochrome P450 reductase (CPR; NADPH-ferrihemoprotein reductase). Functions as a critical regulatory enzyme of bile acid biosynthesis and cholesterol homeostasis. Catalyzes the hydroxylation of carbon hydrogen bond at 7-alpha position of cholesterol, a rate-limiting step in cholesterol catabolism and bile acid biosynthesis. 7-alpha hydroxylates several oxysterols, including 4beta-hydroxycholesterol and 24-hydroxycholesterol. Catalyzes the oxidation of the 7,8 double bond of 7-dehydrocholesterol and lathosterol with direct and predominant formation of the 7-keto derivatives. This chain is Cytochrome P450 7A1, found in Homo sapiens (Human).